A 206-amino-acid polypeptide reads, in one-letter code: MARYLGPKLKLSRREGTDLFLKSGVRAIDTKCKIDNAPGVHGARRGRLSEYGVQLREKQKVRRIYGVLEKQFRNYYKEAARLKGNTGENLLQLLEGRLDNVVYRMGFGATRAEARQLVSHKAILVNGKVVNVPSFNVAANDVVAVREKAKKQSRIKAALEVAEQREKPTWIEVDVNTMEGTFKRMPERSDLSADINEQLIVELYSK.

Residues 96–158 (GRLDNVVYRM…AKKQSRIKAA (63 aa)) enclose the S4 RNA-binding domain.

It belongs to the universal ribosomal protein uS4 family. Part of the 30S ribosomal subunit. Contacts protein S5. The interaction surface between S4 and S5 is involved in control of translational fidelity.

Functionally, one of the primary rRNA binding proteins, it binds directly to 16S rRNA where it nucleates assembly of the body of the 30S subunit. In terms of biological role, with S5 and S12 plays an important role in translational accuracy. This is Small ribosomal subunit protein uS4 from Vibrio cholerae serotype O1 (strain ATCC 39541 / Classical Ogawa 395 / O395).